We begin with the raw amino-acid sequence, 305 residues long: NAD kinase (305 aa).

Residue D76 is the Proton acceptor of the active site. Residues 76-77, 150-151, R161, and D180 each bind NAD(+); these read DG and ND.

It belongs to the NAD kinase family. A divalent metal cation serves as cofactor.

The protein resides in the cytoplasm. The catalysed reaction is NAD(+) + ATP = ADP + NADP(+) + H(+). Involved in the regulation of the intracellular balance of NAD and NADP, and is a key enzyme in the biosynthesis of NADP. Catalyzes specifically the phosphorylation on 2'-hydroxyl of the adenosine moiety of NAD to yield NADP. In Treponema pallidum (strain Nichols), this protein is NAD kinase.